The chain runs to 593 residues: Eukaryotic peptide chain release factor subunit 1 (593 aa).

The protein belongs to the eukaryotic release factor 1 family. Heterodimer of two subunits, one of which binds GTP.

It localises to the cytoplasm. Its function is as follows. Directs the termination of nascent peptide synthesis (translation) in response to the termination codons UAA, UAG and UGA. The sequence is that of Eukaryotic peptide chain release factor subunit 1 from Caenorhabditis elegans.